A 176-amino-acid polypeptide reads, in one-letter code: Transcriptional repressor NrdR (176 aa).

Residues 3–34 fold into a zinc finger; that stretch reads CPYCGSLETQVKDSRPTDDASAIRRRRVCPDC. The region spanning 49-139 is the ATP-cone domain; sequence LTVLKKSGRR…VYRNFREARD (91 aa). Residues 147–176 form a disordered region; the sequence is LDGAAQPEAPSKDDGGTDEPPAKTRAPTRA.

This sequence belongs to the NrdR family. The cofactor is Zn(2+).

In terms of biological role, negatively regulates transcription of bacterial ribonucleotide reductase nrd genes and operons by binding to NrdR-boxes. This is Transcriptional repressor NrdR from Methylocella silvestris (strain DSM 15510 / CIP 108128 / LMG 27833 / NCIMB 13906 / BL2).